A 726-amino-acid polypeptide reads, in one-letter code: Endo-1,4-beta-xylanase/feruloyl esterase (726 aa).

An N-terminal signal peptide occupies residues 1-19 (MKKLLVALSLIAGSLTASA). The 343-residue stretch at 27–369 (YAAGPGLKDA…KRSLQIIRDF (343 aa)) folds into the GH10 domain. E161 serves as the catalytic Proton donor; for xylanase activity. The Nucleophile; for xylanase activity role is filled by E280. The tract at residues 370–726 (DAAMDNRKPK…LEKMAQSLFK (357 aa)) is feruloyl esterase. S629 acts as the Nucleophile; for esterase activity in catalysis.

It in the N-terminal section; belongs to the glycosyl hydrolase 10 (cellulase F) family. Monomer or homodimer.

It catalyses the reaction Endohydrolysis of (1-&gt;4)-beta-D-xylosidic linkages in xylans.. The catalysed reaction is feruloyl-polysaccharide + H2O = ferulate + polysaccharide.. It functions in the pathway glycan degradation; xylan degradation. Functionally, involved in degradation of plant cell wall polysaccharides. Has endo-xylanase activity towards substrates such as oat spelt xylan (OSX), acetylated xylo-oligosaccharides and acetylated xylan, producing primarily xylobiose; cannot hydrolyze xylobiose to xylose. Also has feruloyl esterase activity, releasing ferulic acid from methylferulate, and from the more natural substrates wheat bran, corn fiber, and XOS(FA,Ac), a corn fiber-derived substrate enriched in O-acetyl and ferulic acid esters. Exhibits negligible acetyl esterase activity on sugar acetates. Acts synergistically with Xyl3A to increase the release of xylose from xylan. Does not possess endoglucanase or mannanase activities since it is not able to hydrolyze carboxymethyl cellulose and locust bean gum. The sequence is that of Endo-1,4-beta-xylanase/feruloyl esterase from Xylanibacter ruminicola (strain ATCC 19189 / DSM 19721 / CIP 105475 / JCM 8958 / 23) (Prevotella ruminicola).